The chain runs to 500 residues: MNDFPWLTIIVVFPISAGSLMLFLPHRGNKVNKWYTICICILELLLTTYAFCYNFKMDDPLIQLSEDYKWINFFDFYWRMGIDGLSIGTILLTGFITTLATLAAFPVTRDSRLFHFLMLAMYSGQIGSFSSRDLLLFFIMWELELIPVYLLLAMWGGKKRLYSATKFILYTAGSSIFLLIGVLGISLYGSNEPTLNLELLANQSYPVTLEILFYIGFLIAFAVKSPIIPLHTWLPDTHGEAHYSTCMLLAGILLKMGAYGLVRINMELLPHAHSMFSPWLMVVGTIQIIYAASTSPGQRNLKKRIAYSSVSHMGFIIIGISSITDPGLNGAILQIISHGFIGAALFFLAGTSYDRIRLVYLDEMGGMAISIPKIFTMFTILSMASLALPGMSGFIAELIVFFGIITSQKYFLIFKILIIFVMAIGMILTPIYLLSMSRQMFYGYKLINVKNFSFFDSGPRELFLSISILIPIIGIGIYPDFVLSLASDKVESILSNYFYG.

A run of 15 helical transmembrane segments spans residues 4–24 (FPWL…MLFL), 35–55 (YTIC…CYNF), 87–107 (IGTI…AFPV), 113–130 (LFHF…GSFS), 134–154 (LLLF…LLAM), 167–187 (FILY…GISL), 211–231 (ILFY…IPLH), 242–262 (HYST…YGLV), 272–292 (AHSM…IYAA), 305–325 (IAYS…SITD), 330–350 (GAIL…FLAG), 364–384 (MGGM…LSMA), 386–406 (LALP…GIIT), 411–431 (FLIF…LTPI), and 462–482 (LFLS…PDFV).

The protein belongs to the complex I subunit 4 family.

The protein resides in the plastid. It localises to the chloroplast thylakoid membrane. The catalysed reaction is a plastoquinone + NADH + (n+1) H(+)(in) = a plastoquinol + NAD(+) + n H(+)(out). The enzyme catalyses a plastoquinone + NADPH + (n+1) H(+)(in) = a plastoquinol + NADP(+) + n H(+)(out). The sequence is that of NAD(P)H-quinone oxidoreductase chain 4, chloroplastic from Capsella bursa-pastoris (Shepherd's purse).